A 679-amino-acid polypeptide reads, in one-letter code: FAST kinase domain-containing protein 2, mitochondrial (679 aa).

Serine 113 and serine 126 each carry phosphoserine. The RAP domain maps to 607–664 (VAVLCVPKSAYCLNSNHLRGLMAMKIRHLNVMGFHVILIHNWELKKLKMEDAVTFVRK).

It belongs to the FAST kinase family. As to quaternary structure, monomer. Found in a complex with GRSF1, DDX28, DHX30 and FASTKD5. Associates with the 16S mitochondrial rRNA (16S mt-rRNA). Forms a regulatory protein-RNA complex, consisting of RCC1L, NGRN, RPUSD3, RPUSD4, TRUB2, FASTKD2 and 16S mt-rRNA.

The protein resides in the mitochondrion matrix. The protein localises to the mitochondrion nucleoid. In terms of biological role, plays an important role in assembly of the mitochondrial large ribosomal subunit. As a component of a functional protein-RNA module, consisting of RCC1L, NGRN, RPUSD3, RPUSD4, TRUB2, FASTKD2 and 16S mitochondrial ribosomal RNA (16S mt-rRNA), controls 16S mt-rRNA abundance and is required for intra-mitochondrial translation. May play a role in mitochondrial apoptosis. This chain is FAST kinase domain-containing protein 2, mitochondrial (Fastkd2), found in Rattus norvegicus (Rat).